The following is a 227-amino-acid chain: Protein SSO0193 (227 aa).

Positions 15 to 209 constitute an AMMECR1 domain; sequence EIGRLLIEIA…ETKPNGSDII (195 aa).

This chain is Protein SSO0193, found in Saccharolobus solfataricus (strain ATCC 35092 / DSM 1617 / JCM 11322 / P2) (Sulfolobus solfataricus).